The chain runs to 479 residues: Cardiolipin synthase A (479 aa).

2 helical membrane-spanning segments follow: residues 8 to 28 and 38 to 58; these read FFGY…LHAV and IAWA…YLVF. 2 PLD phosphodiesterase domains span residues 218-245 and 392-419; these read VNFR…GDEY and QPGF…DNRS. Active-site residues include H223, K225, D230, H397, K399, and D404.

Belongs to the phospholipase D family. Cardiolipin synthase subfamily. ClsA sub-subfamily.

It is found in the cell inner membrane. It carries out the reaction 2 a 1,2-diacyl-sn-glycero-3-phospho-(1'-sn-glycerol) = a cardiolipin + glycerol. Catalyzes the reversible phosphatidyl group transfer from one phosphatidylglycerol molecule to another to form cardiolipin (CL) (diphosphatidylglycerol) and glycerol. The chain is Cardiolipin synthase A from Pseudomonas putida (strain GB-1).